The sequence spans 469 residues: Swarming motility regulation sensor protein RssA (469 aa).

Helical transmembrane passes span 12–32 (IIFQ…WVKY) and 167–187 (VPLL…AYFS). A Histidine kinase domain is found at 245–459 (DAAHELRTPI…GFIIDLPESY (215 aa)). H248 bears the Phosphohistidine; by autocatalysis mark.

Its subcellular location is the cell inner membrane. It carries out the reaction ATP + protein L-histidine = ADP + protein N-phospho-L-histidine.. In terms of biological role, member of the two-component regulatory system RssA/RssB involved in regulation of swarming motility which has been shown to be inhibited by saturated fatty acids. RssA/RssB regulates cellular fatty acid composition, hemolysin production and cell surface topography. RssA/RssB negatively regulates the activity of SlhBA. It can also act as a negative regulator for the control of the swarming initiation. The polypeptide is Swarming motility regulation sensor protein RssA (rssA) (Serratia marcescens).